A 74-amino-acid chain; its full sequence is Cytochrome c oxidase subunit 3 (74 aa).

Helical transmembrane passes span 15–37 and 42–59; these read SPWP…KWFH and SLFL…YQWW.

The protein belongs to the cytochrome c oxidase subunit 3 family. Component of the cytochrome c oxidase (complex IV, CIV), a multisubunit enzyme composed of a catalytic core of 3 subunits and several supernumerary subunits. The complex exists as a monomer or a dimer and forms supercomplexes (SCs) in the inner mitochondrial membrane with ubiquinol-cytochrome c oxidoreductase (cytochrome b-c1 complex, complex III, CIII).

It localises to the mitochondrion inner membrane. It carries out the reaction 4 Fe(II)-[cytochrome c] + O2 + 8 H(+)(in) = 4 Fe(III)-[cytochrome c] + 2 H2O + 4 H(+)(out). In terms of biological role, component of the cytochrome c oxidase, the last enzyme in the mitochondrial electron transport chain which drives oxidative phosphorylation. The respiratory chain contains 3 multisubunit complexes succinate dehydrogenase (complex II, CII), ubiquinol-cytochrome c oxidoreductase (cytochrome b-c1 complex, complex III, CIII) and cytochrome c oxidase (complex IV, CIV), that cooperate to transfer electrons derived from NADH and succinate to molecular oxygen, creating an electrochemical gradient over the inner membrane that drives transmembrane transport and the ATP synthase. Cytochrome c oxidase is the component of the respiratory chain that catalyzes the reduction of oxygen to water. Electrons originating from reduced cytochrome c in the intermembrane space (IMS) are transferred via the dinuclear copper A center (CU(A)) of subunit 2 and heme A of subunit 1 to the active site in subunit 1, a binuclear center (BNC) formed by heme A3 and copper B (CU(B)). The BNC reduces molecular oxygen to 2 water molecules using 4 electrons from cytochrome c in the IMS and 4 protons from the mitochondrial matrix. This is Cytochrome c oxidase subunit 3 (mt:CoIII) from Drosophila simulans (Fruit fly).